Reading from the N-terminus, the 432-residue chain is Putative D-alanyl-D-alanine carboxypeptidase (432 aa).

Residues 7–25 (ATVLLTFSLSAFAVEYPVL) form a helical; Signal-anchor membrane-spanning segment.

It belongs to the peptidase S12 family. YfeW subfamily.

Its subcellular location is the cell inner membrane. It catalyses the reaction Preferential cleavage: (Ac)2-L-Lys-D-Ala-|-D-Ala. Also transpeptidation of peptidyl-alanyl moieties that are N-acyl substituents of D-alanine.. The chain is Putative D-alanyl-D-alanine carboxypeptidase from Salmonella enteritidis PT4 (strain P125109).